The sequence spans 421 residues: G/T mismatch-specific thymine DNA glycosylase (421 aa).

Residues 45 to 108 are disordered; sequence PNMATVTEQQ…STKSKEKQEK (64 aa). Basic and acidic residues predominate over residues 77–89; sequence RAAEPQEPVEPKK. Residues 91 to 100 show a composition bias toward basic residues; sequence ATSKKSGKST. Glycyl lysine isopeptide (Lys-Gly) (interchain with G-Cter in SUMO2) cross-links involve residues Lys-114 and Lys-259. A Glycyl lysine isopeptide (Lys-Gly) (interchain with G-Cter in SUMO); alternate cross-link involves residue Lys-341. Lys-341 participates in a covalent cross-link: Glycyl lysine isopeptide (Lys-Gly) (interchain with G-Cter in SUMO2); alternate.

It belongs to the uracil-DNA glycosylase (UDG) superfamily. TDG/mug family. In terms of assembly, homodimer. Interacts with AICDA and GADD45A. Post-translationally, sumoylation on Lys-341 by either SUMO1 or SUMO2 induces dissociation of the product DNA.

Its subcellular location is the nucleus. The enzyme catalyses Hydrolyzes mismatched double-stranded DNA and polynucleotides, releasing free thymine.. Its function is as follows. DNA glycosylase that plays a key role in active DNA demethylation: specifically recognizes and binds 5-formylcytosine (5fC) and 5-carboxylcytosine (5caC) in the context of CpG sites and mediates their excision through base-excision repair (BER) to install an unmethylated cytosine. Cannot remove 5-hydroxymethylcytosine (5hmC). According to an alternative model, involved in DNA demethylation by mediating DNA glycolase activity toward 5-hydroxymethyluracil (5hmU) produced by deamination of 5hmC. Also involved in DNA repair by acting as a thymine-DNA glycosylase that mediates correction of G/T mispairs to G/C pairs: in the DNA of higher eukaryotes, hydrolytic deamination of 5-methylcytosine to thymine leads to the formation of G/T mismatches. Its role in the repair of canonical base damage is however minor compared to its role in DNA demethylation. It is capable of hydrolyzing the carbon-nitrogen bond between the sugar-phosphate backbone of the DNA and a mispaired thymine. In addition to the G/T, it can remove thymine also from C/T and T/T mispairs in the order G/T &gt;&gt; C/T &gt; T/T. It has no detectable activity on apyrimidinic sites and does not catalyze the removal of thymine from A/T pairs or from single-stranded DNA. It can also remove uracil and 5-bromouracil from mispairs with guanine. The sequence is that of G/T mismatch-specific thymine DNA glycosylase (Tdg) from Mus musculus (Mouse).